The chain runs to 441 residues: Protein translocase subunit SecY (441 aa).

The next 10 membrane-spanning stretches (helical) occupy residues 25 to 45 (YFVI…IPGI), 78 to 98 (IFAL…ILTL), 126 to 146 (LILA…IPGL), 155 to 175 (ISFY…LMWL), 184 to 204 (IGNG…PSSF), 218 to 238 (VLLF…VVYI), 275 to 295 (VIPA…ASWF), 318 to 338 (YILT…GLAF), 376 to 396 (FLGS…RFFM), and 398 to 418 (VPFY…IDFI).

The protein belongs to the SecY/SEC61-alpha family. As to quaternary structure, component of the Sec protein translocase complex. Heterotrimer consisting of SecY, SecE and SecG subunits. The heterotrimers can form oligomers, although 1 heterotrimer is thought to be able to translocate proteins. Interacts with the ribosome. Interacts with SecDF, and other proteins may be involved. Interacts with SecA.

It localises to the cell membrane. Its function is as follows. The central subunit of the protein translocation channel SecYEG. Consists of two halves formed by TMs 1-5 and 6-10. These two domains form a lateral gate at the front which open onto the bilayer between TMs 2 and 7, and are clamped together by SecE at the back. The channel is closed by both a pore ring composed of hydrophobic SecY resides and a short helix (helix 2A) on the extracellular side of the membrane which forms a plug. The plug probably moves laterally to allow the channel to open. The ring and the pore may move independently. This Buchnera aphidicola subsp. Baizongia pistaciae (strain Bp) protein is Protein translocase subunit SecY.